Here is an 85-residue protein sequence, read N- to C-terminus: Anti-neuroexcitation peptide 3 (85 aa).

Residues 1-21 form the signal peptide; sequence MKLSLLLVISASMLIDGLVNA. In terms of domain architecture, LCN-type CS-alpha/beta spans 22–82; the sequence is DGYIRGSNGC…TWKSESNTCG (61 aa). 4 cysteine pairs are disulfide-bonded: cysteine 31-cysteine 81, cysteine 35-cysteine 56, cysteine 42-cysteine 63, and cysteine 46-cysteine 65.

The protein belongs to the long (4 C-C) scorpion toxin superfamily. Sodium channel inhibitor family. Beta subfamily. Expressed by the venom gland.

It localises to the secreted. Binds to sodium channels (Nav) and inhibits them. Recombinant ANEP delays the convulsion seizure of model animals by 18% and shows anti-neuroexcitatory activity. In Olivierus martensii (Manchurian scorpion), this protein is Anti-neuroexcitation peptide 3.